Consider the following 730-residue polypeptide: ABC transporter G family member 20 (730 aa).

The ABC transporter domain maps to 15–244 (ISLKNVCRGY…YESQTLEEVF (230 aa)). 47 to 54 (GASGSGKT) is a binding site for ATP. Residues 281 to 303 (VNNNNNNNNNNNNNNYNNNDDEE) form a disordered region. Residues 282–298 (NNNNNNNNNNNNNNYNN) are compositionally biased toward low complexity. The ABC transmembrane type-2 domain occupies 489 to 717 (SFETLAKQQA…FIAVLALNEK (229 aa)). Helical transmembrane passes span 520–540 (FIDF…AISI), 572–592 (FLGH…IAIY), 602–622 (IALV…LGLV), 634–654 (IQLS…LWPL), and 692–712 (VWVA…IAVL).

Belongs to the ABC transporter superfamily.

It is found in the membrane. The sequence is that of ABC transporter G family member 20 (abcG20) from Dictyostelium discoideum (Social amoeba).